A 211-amino-acid polypeptide reads, in one-letter code: PITH domain-containing protein CG6153 (211 aa).

In terms of domain architecture, PITH spans Asp-20–Arg-192.

Belongs to the PITHD1 family.

In Drosophila melanogaster (Fruit fly), this protein is PITH domain-containing protein CG6153.